Here is a 633-residue protein sequence, read N- to C-terminus: MTAPHETMSFQAEVKQLLHLMIHSLYSNKEIFLRELVSNASDATDKLRFEAIANPALLENDADLAIRIEADPAARTLKITDNGIGMSRDEAIRNLGTIARSGTKEFFQQLSGDQQKDAALIGQFGVGFYSAFIVADKVTVETRRAGLAADEAVRWESAGDGEFSIDAINRAERGSTITLHLREGEDDFLSSYRLQNIIRKYSDHISLPIRMPKEEWDAEAQQQKVTGEWESVNQASALWTRSKSDITDEQYQAFYQHIAHDHEAPLAWTHNRVEGRSEYTQLLYIPARAPFDLWDRNHKAGLKLYVKRVFIMDDADQLLPAYLRWVKGVVDSADLPLNVSRELLQESRDVKAIREGCAKRVLSMLEAMADSEDEAERAKYKTFWEQFGQVLKEGVGEDHGNGERIAKLLRFATTHGDTAEQSVSLVDYVGRMKEGQDKIYYVTADTWVAAKSSPHLEVFRKKGIEVVLLTDRVDEWLLSYLHEFDGKQLVSVARGDLDLGALADEAEKAEQEKASADWKEVVDRAKSVLEGKAKDVRVTLRLTDSASCLVSDDGDMSGYLQRLLKQAGQKAPDAQPILELNPEHALVKKLRDLPDGEAFGDRVRVLFDQALLAEGGMLDDPAAYVQRVNRLLA.

Positions 1–341 (MTAPHETMSF…SADLPLNVSR (341 aa)) are a; substrate-binding. A b region spans residues 342-562 (ELLQESRDVK…DGDMSGYLQR (221 aa)). The interval 563-633 (LLKQAGQKAP…YVQRVNRLLA (71 aa)) is c.

Belongs to the heat shock protein 90 family. As to quaternary structure, homodimer.

Its subcellular location is the cytoplasm. In terms of biological role, molecular chaperone. Has ATPase activity. The sequence is that of Chaperone protein HtpG from Cupriavidus metallidurans (strain ATCC 43123 / DSM 2839 / NBRC 102507 / CH34) (Ralstonia metallidurans).